A 307-amino-acid polypeptide reads, in one-letter code: Nitrogenase iron protein 2 (307 aa).

ATP is bound at residue 13–20 (GKGGIGKS). C101 serves as a coordination point for [4Fe-4S] cluster. Residue R104 is modified to ADP-ribosylarginine; by dinitrogenase reductase ADP-ribosyltransferase. C135 contributes to the [4Fe-4S] cluster binding site. The segment at 285–307 (QLTETDKAAKESEKKQEDAEGEA) is disordered.

Belongs to the NifH/BchL/ChlL family. As to quaternary structure, homodimer. [4Fe-4S] cluster is required as a cofactor. The reversible ADP-ribosylation of Arg-104 inactivates the nitrogenase reductase and regulates nitrogenase activity.

It carries out the reaction N2 + 8 reduced [2Fe-2S]-[ferredoxin] + 16 ATP + 16 H2O = H2 + 8 oxidized [2Fe-2S]-[ferredoxin] + 2 NH4(+) + 16 ADP + 16 phosphate + 6 H(+). In terms of biological role, the key enzymatic reactions in nitrogen fixation are catalyzed by the nitrogenase complex, which has 2 components: the iron protein and the molybdenum-iron protein. The sequence is that of Nitrogenase iron protein 2 (nifH2) from Mastigocladus laminosus (Fischerella sp.).